Here is an 84-residue protein sequence, read N- to C-terminus: Small ribosomal subunit protein uS17 (84 aa).

This sequence belongs to the universal ribosomal protein uS17 family. Part of the 30S ribosomal subunit.

Its function is as follows. One of the primary rRNA binding proteins, it binds specifically to the 5'-end of 16S ribosomal RNA. This is Small ribosomal subunit protein uS17 from Thermoanaerobacter pseudethanolicus (strain ATCC 33223 / 39E) (Clostridium thermohydrosulfuricum).